The following is a 677-amino-acid chain: WD repeat-containing protein 48 (677 aa).

At tyrosine 28 the chain carries Phosphotyrosine. WD repeat units follow at residues 28–67 (YNRN…QDPY), 73–112 (HHTD…CMST), 115–154 (THKD…ALTA), 166–205 (GNKD…KLMK), 208–247 (GHTD…CIAT), 250–289 (VHDE…IRVL), 292–334 (EEKA…NFRA), and 358–397 (KGGA…KVED). Lysine 214 carries the N6-acetyllysine modification. At lysine 578 the chain carries N6-acetyllysine. The segment at 607 to 628 (LDNESQTTSSSNNEKPGEQEKE) is disordered. Residues 609-620 (NESQTTSSSNNE) show a composition bias toward low complexity. Residue threonine 613 is modified to Phosphothreonine.

Belongs to the WD repeat WDR48 family. In terms of assembly, interacts with USP46. Interacts with USP1. Interacts with USP12. Component of the USP12-WDR20-WDR48 deubiquitinating complex. Component of the USP12-DMWD-WDR48 deubiquitinating complex. Interacts with PHLPP1. Interacts with RAD51AP1; the interaction is direct and promotes formation of a trimeric complex with RAD51 via RAD51AP1. Interacts with ATAD5; the interaction regulates USP1-mediated PCNA deubiquitination. Interacts with RAD51; the interaction is enhanced under replication stress. Interacts with ITCH; the interaction is more efficient when both USP12 and WDR48/UAF1 are involved and may facilitate recruitment of the USP12 deubiquitinating complex to Notch. (Microbial infection) Interacts with papillomavirus HPV11 E1 protein. As to quaternary structure, (Microbial infection) Interacts with Saimiriine herpesvirus TIP protein. In terms of assembly, (Microbial infection) Interacts with human cytomegalovirus protein UL138. (Microbial infection) Interacts with Epstein-Barr virus protein EBNA3. In terms of tissue distribution, ubiquitous.

The protein localises to the nucleus. The protein resides in the cytoplasm. Its subcellular location is the lysosome. It localises to the late endosome. Regulator of deubiquitinating complexes, which acts as a strong activator of USP1, USP12 and USP46. Enhances the USP1-mediated deubiquitination of FANCD2; USP1 being almost inactive by itself. Activates deubiquitination by increasing the catalytic turnover without increasing the affinity of deubiquitinating enzymes for the substrate. Also activates deubiquitinating activity of complexes containing USP12. In complex with USP12, acts as a potential tumor suppressor by positively regulating PHLPP1 stability. Docks at the distal end of the USP12 fingers domain and induces a cascade of structural changes leading to the activation of the enzyme. Together with RAD51AP1, promotes DNA repair by stimulating RAD51-mediated homologous recombination. Binds single-stranded DNA (ssDNA) and double-stranded DNA (dsDNA). DNA-binding is required both for USP1-mediated deubiquitination of FANCD2 and stimulation of RAD51-mediated homologous recombination: both WDR48/UAF1 and RAD51AP1 have coordinated role in DNA-binding during these processes. Together with ATAD5 and by regulating USP1 activity, has a role in PCNA-mediated translesion synthesis (TLS) by deubiquitinating monoubiquitinated PCNA. Together with ATAD5, has a role in recruiting RAD51 to stalled forks during replication stress. Functionally, (Microbial infection) In case of infection by Herpesvirus saimiri, may play a role in vesicular transport or membrane fusion events necessary for transport to lysosomes. Induces lysosomal vesicle formation via interaction with Herpesvirus saimiri tyrosine kinase-interacting protein (TIP). Subsequently, TIP recruits tyrosine-protein kinase LCK, resulting in down-regulation of T-cell antigen receptor TCR. May play a role in generation of enlarged endosomal vesicles via interaction with TIP. In case of infection by papillomavirus HPV11, promotes the maintenance of the viral genome via its interaction with HPV11 helicase E1. The chain is WD repeat-containing protein 48 from Homo sapiens (Human).